A 354-amino-acid chain; its full sequence is Kelch domain-containing protein 8B (354 aa).

Kelch repeat units follow at residues 1-31, 32-79, 81-127, 128-175, 176-222, 224-281, 282-329, and 331-354; these read MATGGGRAFAWQVFPPMPTCRVYGTVAFQDG, HLLV…VLGK, VLVV…ERDG, MVYA…LHGN, KIYV…MAEG, VFSL…SLGD, HVVA…QAGP, and LFAIGGVAQGPSQAVEALCLRDGV.

It localises to the cytoplasm. Its subcellular location is the midbody. Functionally, involved in pinching off the separated nuclei at the cleavage furrow and in cytokinesis. Required for mitotic integrity and maintenance of chromosomal stability. Protects cells against mitotic errors, centrosomal amplification, micronucleus formation and aneuploidy. Plays a key role of midbody function involving abscission of the daughter cells during cytokinesis and appropriate chromosomal and nuclear segregation into the daughter cells. The sequence is that of Kelch domain-containing protein 8B (KLHDC8B) from Bos taurus (Bovine).